Here is a 247-residue protein sequence, read N- to C-terminus: Geranylgeranylglyceryl phosphate synthase (247 aa).

Positions 23 and 52 each coordinate Mg(2+). Sn-glycerol 1-phosphate is bound by residues Tyr171 to Gly177, Gly203 to Gly204, and Gly225 to Thr226.

The protein belongs to the GGGP/HepGP synthase family. Group II subfamily. Mg(2+) serves as cofactor.

It is found in the cytoplasm. The enzyme catalyses sn-glycerol 1-phosphate + (2E,6E,10E)-geranylgeranyl diphosphate = sn-3-O-(geranylgeranyl)glycerol 1-phosphate + diphosphate. It participates in membrane lipid metabolism; glycerophospholipid metabolism. Functionally, prenyltransferase that catalyzes the transfer of the geranylgeranyl moiety of geranylgeranyl diphosphate (GGPP) to the C3 hydroxyl of sn-glycerol-1-phosphate (G1P). This reaction is the first ether-bond-formation step in the biosynthesis of archaeal membrane lipids. In Methanococcoides burtonii (strain DSM 6242 / NBRC 107633 / OCM 468 / ACE-M), this protein is Geranylgeranylglyceryl phosphate synthase.